The chain runs to 360 residues: tRNA N6-adenosine threonylcarbamoyltransferase (360 aa).

Fe cation-binding residues include histidine 115 and histidine 119. Substrate contacts are provided by residues 137-141 (LVSGG), aspartate 170, glycine 183, and asparagine 283. Aspartate 311 contributes to the Fe cation binding site.

Belongs to the KAE1 / TsaD family. Fe(2+) is required as a cofactor.

It is found in the cytoplasm. It catalyses the reaction L-threonylcarbamoyladenylate + adenosine(37) in tRNA = N(6)-L-threonylcarbamoyladenosine(37) in tRNA + AMP + H(+). In terms of biological role, required for the formation of a threonylcarbamoyl group on adenosine at position 37 (t(6)A37) in tRNAs that read codons beginning with adenine. Is involved in the transfer of the threonylcarbamoyl moiety of threonylcarbamoyl-AMP (TC-AMP) to the N6 group of A37, together with TsaE and TsaB. TsaD likely plays a direct catalytic role in this reaction. The sequence is that of tRNA N6-adenosine threonylcarbamoyltransferase from Sinorhizobium medicae (strain WSM419) (Ensifer medicae).